A 439-amino-acid polypeptide reads, in one-letter code: Glucan 1,3-beta-glucosidase (439 aa).

Positions 1 to 18 (MLLSLLFLLSTFAFGALT) are cleaved as a signal peptide. Catalysis depends on Glu227, which acts as the Proton donor. 2 disulfides stabilise this stretch: Cys311/Cys437 and Cys336/Cys366. The active-site Nucleophile is Glu328.

Belongs to the glycosyl hydrolase 5 (cellulase A) family.

Its subcellular location is the secreted. The catalysed reaction is Successive hydrolysis of beta-D-glucose units from the non-reducing ends of (1-&gt;3)-beta-D-glucans, releasing alpha-glucose.. In terms of biological role, beta-glucanases participate in the metabolism of beta-glucan, the main structural component of the cell wall. It could also function biosynthetically as a transglycosylase. This Lachancea kluyveri (strain ATCC 58438 / CBS 3082 / BCRC 21498 / NBRC 1685 / JCM 7257 / NCYC 543 / NRRL Y-12651) (Yeast) protein is Glucan 1,3-beta-glucosidase (EXG1).